A 337-amino-acid polypeptide reads, in one-letter code: Outer membrane protein assembly factor BamC (337 aa).

Residues 1-16 form the signal peptide; it reads MKKWLFPFAFVATLAG. Cysteine 17 is lipidated: N-palmitoyl cysteine. A lipid anchor (S-diacylglycerol cysteine) is attached at cysteine 17.

Belongs to the BamC family. As to quaternary structure, part of the Bam complex.

It is found in the cell outer membrane. In terms of biological role, part of the outer membrane protein assembly complex, which is involved in assembly and insertion of beta-barrel proteins into the outer membrane. In Pasteurella multocida (strain Pm70), this protein is Outer membrane protein assembly factor BamC.